Reading from the N-terminus, the 728-residue chain is Polyribonucleotide nucleotidyltransferase (728 aa).

Residues D503 and D509 each contribute to the Mg(2+) site. Residues 570 to 629 form the KH domain; that stretch reads PRLTTIKIPSDCIGMVIGKGGETIRGITEETGAEINIADDGTVTIACTTKEGTDAALATI. The S1 motif domain occupies 639–713; that stretch reads GNIYVGKVRD…GKTKFALSIK (75 aa).

This sequence belongs to the polyribonucleotide nucleotidyltransferase family. Mg(2+) serves as cofactor.

Its subcellular location is the cytoplasm. It catalyses the reaction RNA(n+1) + phosphate = RNA(n) + a ribonucleoside 5'-diphosphate. Functionally, involved in mRNA degradation. Catalyzes the phosphorolysis of single-stranded polyribonucleotides processively in the 3'- to 5'-direction. The sequence is that of Polyribonucleotide nucleotidyltransferase from Chlorobium chlorochromatii (strain CaD3).